The primary structure comprises 326 residues: Vacuolar protein sorting-associated protein 26A-B (326 aa).

Belongs to the VPS26 family. In terms of assembly, component of the heterotrimeric retromer cargo-selective complex (CSC) which is believed to associate with variable sorting nexins to form functionally distinct retromer complex variants.

It localises to the cytoplasm. The protein resides in the endosome membrane. Its subcellular location is the early endosome. In terms of biological role, acts as a component of the retromer cargo-selective complex (CSC). The CSC is believed to be the core functional component of retromer or respective retromer complex variants acting to prevent missorting of selected transmembrane cargo proteins into the lysosomal degradation pathway. Retromer mediates retrograde transport of cargo proteins from endosomes to the trans-Golgi network (TGN). This is Vacuolar protein sorting-associated protein 26A-B (vps26a-b) from Xenopus laevis (African clawed frog).